The chain runs to 249 residues: MANTGSLVLLRHGESDWNALNLFTGWVDVGLTDKGQAEAVRSGELIAEHDLLPDVLYTSLLRRAITTAHLALDSADRLWIPVRRSWRLNERHYGALQGLDKAETKARYGEEQFMAWRRSYDTPPPPIERGSQFSQDADPRYADIGGGPLTECLADVVARFLPYFTDVIVGDLRVGKTVLIVAHGNSLRALVKHLDQMSDDEIVGLNIPTGIPLRYDLDSAMRPLVRGGTYLDPEAAAAGAAAVAGQGRG.

Residues 11 to 18 (RHGESDWN), 24 to 25 (TG), Arg-63, 90 to 93 (ERHY), Lys-101, 117 to 118 (RR), and 184 to 185 (GN) contribute to the substrate site. Catalysis depends on His-12, which acts as the Tele-phosphohistidine intermediate. Residue Glu-90 is the Proton donor/acceptor of the active site.

The protein belongs to the phosphoglycerate mutase family. BPG-dependent PGAM subfamily.

It catalyses the reaction (2R)-2-phosphoglycerate = (2R)-3-phosphoglycerate. The protein operates within carbohydrate degradation; glycolysis; pyruvate from D-glyceraldehyde 3-phosphate: step 3/5. Functionally, catalyzes the interconversion of 2-phosphoglycerate and 3-phosphoglycerate. The protein is 2,3-bisphosphoglycerate-dependent phosphoglycerate mutase of Mycobacterium bovis (strain BCG / Pasteur 1173P2).